The sequence spans 67 residues: Large ribosomal subunit protein bL35 (67 aa).

This sequence belongs to the bacterial ribosomal protein bL35 family.

The protein is Large ribosomal subunit protein bL35 of Bartonella henselae (strain ATCC 49882 / DSM 28221 / CCUG 30454 / Houston 1) (Rochalimaea henselae).